A 543-amino-acid chain; its full sequence is Tetrahydroberberine oxidase (543 aa).

The first 26 residues, 1–26 (MIPNSSSSSILSLLVLLLFSTSSSWA), serve as a signal peptide directing secretion. Cys37 and Cys97 are oxidised to a cystine. Residues Asn54, Asn74, Asn135, Asn142, Asn162, Asn295, Asn335, Asn440, and Asn482 are each glycosylated (N-linked (GlcNAc...) asparagine). In terms of domain architecture, FAD-binding PCMH-type spans 75-250 (STQKPEFIIT…LSWKVKLVPV (176 aa)). The 6-(S-cysteinyl)-8alpha-(pros-histidyl)-FAD (His-Cys) cross-link spans 112 to 175 (HDVEGLSYVS…NTLGFPAGFC (64 aa)).

It belongs to the oxygen-dependent FAD-linked oxidoreductase family. The cofactor is FAD. The FAD cofactor is bound via a bicovalent 6-S-cysteinyl, 8alpha-N1-histidyl FAD linkage.

It carries out the reaction (S)-canadine + 2 O2 + H(+) = berberine + 2 H2O2. Catalyzes the oxidation of different tetrahydroprotoberberines, such as (S)-canadine, (S)-scoulerine and (S)-tetrahydropalmatine. This is Tetrahydroberberine oxidase from Argemone mexicana (Mexican prickly poppy).